The sequence spans 513 residues: Protein CYCLOPS (513 aa).

2 disordered regions span residues 329-380 (QGRT…STQN) and 395-435 (DDRK…AEAK). The segment covering 333-347 (ASGEPSQSESSAAAP) has biased composition (low complexity). Positions 359 to 380 (PSNSNQTLGDSSWKQVGESTQN) are enriched in polar residues. 2 short sequence motifs (nuclear localization signal) span residues 397 to 400 (RKRK) and 421 to 424 (KKRR). The stretch at 447 to 513 (MQAILKRCEN…ERILSETGKI (67 aa)) forms a coiled coil.

The protein belongs to the CYCLOPS family. As to quaternary structure, forms homodimers. Interacts with CCAMK. As to expression, highly expressed in roots. Expressed in root hairs and nodules. Not detected in leaves or flowers.

Its subcellular location is the nucleus. Functionally, involved symbiotic signaling. Required for root infection by symbiotic rhizobia, infection thread (IT) formation, and nodule development. Required for proper induction of early nodulin gene expression. Probably not involved in nodule organogenesis. Involved in arbuscular mycorrhizal (AM) symbiosis. Required for fungal infection of the outer cortical cell layers, and for arbuscule development during the AM symbiosis. Acts downstream of CCAMK. Required for symbiosome formation (i.e. the release of the bacteria from the ITs) and subsequent symbiosome development. Required for the expression of the nodule-specific RPG gene, which controls proper IT growth and is essential for symbiosome formation. Acts upstream of ERN1, a transcriptional regulator required for nodulation. The chain is Protein CYCLOPS from Medicago truncatula (Barrel medic).